Reading from the N-terminus, the 454-residue chain is O-phospho-L-seryl-tRNA:Cys-tRNA synthase 2 (454 aa).

Residues A146–R147, N251, and S274–H276 contribute to the pyridoxal 5'-phosphate site. N6-(pyridoxal phosphate)lysine is present on K277.

Belongs to the SepCysS family. In terms of assembly, homodimer. Interacts with SepRS. The cofactor is pyridoxal 5'-phosphate.

It carries out the reaction O-phospho-L-seryl-tRNA(Cys) + hydrogen sulfide + H(+) = L-cysteinyl-tRNA(Cys) + phosphate. Its function is as follows. Converts O-phospho-L-seryl-tRNA(Cys) (Sep-tRNA(Cys)) to L-cysteinyl-tRNA(Cys) (Cys-tRNA(Cys)). This is O-phospho-L-seryl-tRNA:Cys-tRNA synthase 2 from Methanoregula boonei (strain DSM 21154 / JCM 14090 / 6A8).